The primary structure comprises 440 residues: Elongation factor 1-gamma (440 aa).

Position 2 is an N-acetylalanine (Ala-2). Residues 2–87 enclose the GST N-terminal domain; that stretch reads AAGTLYTYPE…YVSNEELRGS (86 aa). Residues 88 to 216 enclose the GST C-terminal domain; that stretch reads TPEAAAQVVQ…VKLCEKMAQF (129 aa). N6-acetyllysine is present on residues Lys-147 and Lys-212. A compositionally biased stretch (basic and acidic residues) spans 221 to 257; the sequence is FAESQPKKDTPRKEKGSREEKLKPQAERKEGKEEKKA. The disordered stretch occupies residues 221–267; that stretch reads FAESQPKKDTPRKEKGSREEKLKPQAERKEGKEEKKAAAPAPEEELD. Lys-256 is covalently cross-linked (Glycyl lysine isopeptide (Lys-Gly) (interchain with G-Cter in SUMO1)). The EF-1-gamma C-terminal domain maps to 279 to 440; that stretch reads AKDPFAHLPK…KAFNQGKIFK (162 aa). Residue Lys-288 forms a Glycyl lysine isopeptide (Lys-Gly) (interchain with G-Cter in SUMO2) linkage. Lys-404 is modified (N6-acetyllysine). At Lys-437 the chain carries N6-acetyllysine; alternate. Residue Lys-437 is modified to N6-malonyllysine; alternate.

EF-1 is composed of four subunits: alpha, beta, delta, and gamma.

In terms of biological role, probably plays a role in anchoring the complex to other cellular components. The polypeptide is Elongation factor 1-gamma (EEF1G) (Bos taurus (Bovine)).